Here is a 371-residue protein sequence, read N- to C-terminus: Loganic acid O-methyltransferase (371 aa).

An S-adenosyl-L-homocysteine-binding site is contributed by Y31. Positions 37 and 38 each coordinate loganate. C78, N83, D114, H115, S141, and F142 together coordinate S-adenosyl-L-homocysteine. Loganate is bound by residues H162 and W163. Mg(2+) is bound at residue N180. Loganate-binding residues include A241 and H245. 3 residues coordinate Mg(2+): D267, F269, and N270. Residues Q273 and Q316 each contribute to the loganate site.

Belongs to the methyltransferase superfamily. Type-7 methyltransferase family. Homodimer. It depends on Mg(2+) as a cofactor. Expressed in leaves (especially in leaf epidermis), flowers, siliques and stems, and, at low levels, in hairy roots.

It carries out the reaction loganate + S-adenosyl-L-methionine = loganin + S-adenosyl-L-homocysteine. Its pathway is alkaloid biosynthesis. Its activity is regulated as follows. Strongly repressed by loganin and slightly by S-adenosyl-L-homocysteine. Its function is as follows. Component of the seco-iridoid and derivatives monoterpenoid indole alkaloids (MIAs, e.g. vinblastine and ajmalicine) biosynthesis pathway. Catalyzes the methylation of loganic acid (6S,7R) to produce loganin. Weak activity with secologanic acid as substrate. Inactive on deoxyloganic, dehydrologanic, epiloganic and loganetic acid. The chain is Loganic acid O-methyltransferase from Catharanthus roseus (Madagascar periwinkle).